A 576-amino-acid chain; its full sequence is MAWISLEKAKKLEERFGYPKVSEGKGVLSVEVPKDKFIEFLTFLKEDPEYQFKMFIDLTIIDHGEKENPRFQGVVILFSPKNQERIIVKTWAENETLPTLTNLWKGAKWAEREAWDMFGIKFEGHENLVRMLLWETYPYHPLRKDFPLEGIKDTELPSLNETLRGENLEGLFNYDRMHTALPTMEDLEITQKKRMPVKTSQIVLNWGPLHPGTHGTIWFLFDLDGEYVKQCDIIIGQLHRGVEKLGENVNWQQFIPYTDRMDYIAAINENHAYVLAAEKMLGIEVPEKAKWIRTMMAELSRINSHLLWLGTYALDLGALTMFLYTFREREKIMDIIEGITGARFTINYFRIGGVFADLPYGALDAIEHLIKDLPQRINDYETLLTRNRVWLSRNKDVCVITEEDVYQYGLTGAVARGSGVPYDVRKIDKYDAYGEVEFDIPVGEKGDSYDRYLVRMEEMRQSIRIIEQCIAKLRKMSKDDPYFFQTPDEKKLKVTIDGRGMKLPAGETYASSDNPRGELGFYIYNKKDGLKAHRMRIRSGAFYNLQVFTKAIIGRPIADAITLLSTIDPVVGETDR.

The segment at 1-176 (MAWISLEKAK…NLEGLFNYDR (176 aa)) is NADH dehydrogenase I subunit C. The segment at 200–576 (SQIVLNWGPL…IDPVVGETDR (377 aa)) is NADH dehydrogenase I subunit D.

It in the N-terminal section; belongs to the complex I 30 kDa subunit family. This sequence in the C-terminal section; belongs to the complex I 49 kDa subunit family. NDH-1 is composed of 13 different subunits. Subunits NuoB, CD, E, F, and G constitute the peripheral sector of the complex.

Its subcellular location is the cell inner membrane. The enzyme catalyses a quinone + NADH + 5 H(+)(in) = a quinol + NAD(+) + 4 H(+)(out). NDH-1 shuttles electrons from NADH, via FMN and iron-sulfur (Fe-S) centers, to quinones in the respiratory chain. The immediate electron acceptor for the enzyme in this species is believed to be ubiquinone. Couples the redox reaction to proton translocation (for every two electrons transferred, four hydrogen ions are translocated across the cytoplasmic membrane), and thus conserves the redox energy in a proton gradient. The chain is NADH-quinone oxidoreductase subunit C/D from Sulfurihydrogenibium sp. (strain YO3AOP1).